Reading from the N-terminus, the 37-residue chain is Large ribosomal subunit protein bL36 (37 aa).

Belongs to the bacterial ribosomal protein bL36 family.

The protein is Large ribosomal subunit protein bL36 of Staphylococcus carnosus (strain TM300).